The following is a 1390-amino-acid chain: DNA-directed RNA polymerase subunit beta'' (1390 aa).

Zn(2+)-binding residues include cysteine 220, cysteine 291, cysteine 298, and cysteine 301.

The protein belongs to the RNA polymerase beta' chain family. RpoC2 subfamily. In plastids the minimal PEP RNA polymerase catalytic core is composed of four subunits: alpha, beta, beta', and beta''. When a (nuclear-encoded) sigma factor is associated with the core the holoenzyme is formed, which can initiate transcription. Zn(2+) serves as cofactor.

The protein resides in the plastid. It is found in the chloroplast. It catalyses the reaction RNA(n) + a ribonucleoside 5'-triphosphate = RNA(n+1) + diphosphate. In terms of biological role, DNA-dependent RNA polymerase catalyzes the transcription of DNA into RNA using the four ribonucleoside triphosphates as substrates. This chain is DNA-directed RNA polymerase subunit beta'', found in Populus alba (White poplar).